Reading from the N-terminus, the 141-residue chain is Hemoglobin subunit alpha-D (141 aa).

The Globin domain occupies 1–141 (MLTADDKKLL…VAAVLAEKYR (141 aa)). Heme b-binding residues include His-58 and His-87.

This sequence belongs to the globin family. As to quaternary structure, heterotetramer of two alpha-D chains and two beta chains. Red blood cells.

Involved in oxygen transport from the lung to the various peripheral tissues. The polypeptide is Hemoglobin subunit alpha-D (HBAD) (Chloephaga melanoptera (Andean goose)).